The following is a 226-amino-acid chain: Cytidylate kinase (226 aa).

10 to 18 (GPASSGKST) lines the ATP pocket.

It belongs to the cytidylate kinase family. Type 1 subfamily.

It localises to the cytoplasm. The catalysed reaction is CMP + ATP = CDP + ADP. It carries out the reaction dCMP + ATP = dCDP + ADP. The sequence is that of Cytidylate kinase from Streptococcus pyogenes serotype M18 (strain MGAS8232).